The following is a 531-amino-acid chain: Transcription factor LG2 (531 aa).

2 disordered regions span residues 115–154 (RHQQ…ASSA) and 195–220 (LHGG…KLVD). The segment covering 116–154 (HQQQLHSGNSQSVGSTGTDSSSAQNTMSQMELVSPASSA) has biased composition (polar residues). The bZIP domain occupies 220 to 264 (DAKTERRLAQNREAARKSRLRKKAYVQQLETSRIRLQQVEHELQR). Residues 222–242 (KTERRLAQNREAARKSRLRKK) are basic motif. A Nuclear localization signal motif is present at residues 224-231 (ERRLAQNR). Positions 248–262 (LETSRIRLQQVEHEL) are leucine-zipper. The DOG1 domain occupies 285-499 (AAMFDMEYAR…RALSNLWASR (215 aa)).

This sequence belongs to the bZIP family. As to quaternary structure, binds DNA as a dimer. Expression in meristem/developing ligule regions.

The protein localises to the nucleus. In terms of biological role, required for the formation of the blade-sheath boundary in leaves. Promotes flowering. The chain is Transcription factor LG2 from Zea mays (Maize).